The following is a 333-amino-acid chain: Testin-2 (333 aa).

Residues 1-17 (MIAVLFLAILCLEVDST) form the signal peptide. Cystine bridges form between cysteine 135–cysteine 178, cysteine 169–cysteine 211, and cysteine 269–cysteine 322. The N-linked (GlcNAc...) asparagine glycan is linked to asparagine 173. Residues histidine 276 and asparagine 300 contribute to the active site.

Belongs to the peptidase C1 family. Sertoli cells.

The protein localises to the secreted. This Rattus norvegicus (Rat) protein is Testin-2 (Testin).